Here is a 446-residue protein sequence, read N- to C-terminus: G patch domain-containing protein 4 (446 aa).

Methionine 1 is subject to N-acetylmethionine. Phosphothreonine is present on threonine 4. The 47-residue stretch at 11-57 (GMKFAEEQLLKHGWTQGKGLGRKENGITQALRVTLKQDTHGVGHDPA) folds into the G-patch domain. Lysine 46 is covalently cross-linked (Glycyl lysine isopeptide (Lys-Gly) (interchain with G-Cter in SUMO2)). Threonine 116 bears the Phosphothreonine mark. Disordered stretches follow at residues 116 to 140 (TSGGEKPNKDLESCSDDDNQGSKSP) and 188 to 446 (QDPG…KKRD). A phosphoserine mark is found at serine 128, serine 130, and serine 139. Residues 166-251 (TMKAKLARLE…KKKRRHQEGK (86 aa)) adopt a coiled-coil conformation. The span at 219-237 (ASERNDADEKHPEHAEQNI) shows a compositional bias: basic and acidic residues. Basic residues predominate over residues 238–248 (RKSKKKKRRHQ). 4 stretches are compositionally biased toward basic and acidic residues: residues 249-268 (EGKVSDEREGTTKGNEKEDA), 297-328 (HHEEEKMGVLEEGGKGKEAAGSVRTEEVESRA), 363-375 (REAESRACSDGRS), and 392-409 (LDVRDEKDGGAREAESRA). Composition is skewed to basic residues over residues 416 to 427 (RGKRKRQQHPKK) and 437 to 446 (KAKKKQKKRD).

The protein is G patch domain-containing protein 4 (GPATCH4) of Homo sapiens (Human).